Consider the following 101-residue polypeptide: Histone H1-like protein EM6 (101 aa).

Composition is skewed to basic residues over residues 1 to 35 (AKKRSRSRKRSASRKRSRSRKRSASKKSSKKHVRK) and 58 to 101 (AKKK…RRRR). A disordered region spans residues 1 to 101 (AKKRSRSRKR…SRTARSRRRR (101 aa)). Repeat copies occupy residues 3–4 (KR), 5–6 (SR), 7–8 (SR), and 9–10 (KR). The segment at 3–22 (KRSRSRKRSASRKRSRSRKR) is 10 X 2 AA approximate tandem repeats of [SK]-R. Residues 11-12 (SA) form a 5; approximate repeat. Tandem repeats lie at residues 13-14 (SR), 15-16 (KR), 17-18 (SR), 19-20 (SR), and 21-22 (KR). The segment at 32–65 (HVRKALAAGMKNHLLAHPKGSNNFILAKKKAPRR) is globular.

Sperm.

Its subcellular location is the nucleus. It localises to the chromosome. This chain is Histone H1-like protein EM6, found in Ensis minor (Razor shell).